Consider the following 357-residue polypeptide: Guanine nucleotide-binding protein alpha-1 subunit (357 aa).

Gly-2 carries N-myristoyl glycine lipidation. Cys-4 is lipidated: S-palmitoyl cysteine. A G-alpha domain is found at 32-357; that stretch reads NIIKLLLLGA…STKLKGCGLY (326 aa). A G1 motif region spans residues 35 to 48; the sequence is KLLLLGAGESGKST. GTP-binding residues include Glu-43, Ser-44, Gly-45, Lys-46, Ser-47, Thr-48, Asp-151, Leu-176, Thr-182, Gly-204, Asn-270, Lys-271, Asp-273, and Ala-329. Residue Ser-47 coordinates Mg(2+). The tract at residues 174–182 is G2 motif; it reads DILHTRVPT. Thr-182 serves as a coordination point for Mg(2+). The segment at 197-206 is G3 motif; it reads FRVFDVGGQR. The G4 motif stretch occupies residues 266–273; that stretch reads ILFLNKID. The segment at 327-332 is G5 motif; it reads TCATDT.

The protein belongs to the G-alpha family. In terms of assembly, g proteins are composed of 3 units; alpha, beta and gamma. The alpha chain contains the guanine nucleotide binding site. The cofactor is Mg(2+).

Guanine nucleotide-binding proteins (G proteins) are involved as modulators or transducers in various transmembrane signaling systems. This Caenorhabditis elegans protein is Guanine nucleotide-binding protein alpha-1 subunit (gpa-1).